We begin with the raw amino-acid sequence, 167 residues long: Shikimate kinase (167 aa).

An ATP-binding site is contributed by 12-17 (GSGKTT). Residue Thr16 coordinates Mg(2+). Asp34, Arg58, and Gly80 together coordinate substrate. Arg117 provides a ligand contact to ATP. Arg135 lines the substrate pocket. Position 152 (Arg152) interacts with ATP.

This sequence belongs to the shikimate kinase family. Monomer. It depends on Mg(2+) as a cofactor.

Its subcellular location is the cytoplasm. It catalyses the reaction shikimate + ATP = 3-phosphoshikimate + ADP + H(+). It participates in metabolic intermediate biosynthesis; chorismate biosynthesis; chorismate from D-erythrose 4-phosphate and phosphoenolpyruvate: step 5/7. Functionally, catalyzes the specific phosphorylation of the 3-hydroxyl group of shikimic acid using ATP as a cosubstrate. The sequence is that of Shikimate kinase from Salinispora arenicola (strain CNS-205).